Here is a 392-residue protein sequence, read N- to C-terminus: Transcription factor GATA-4 (392 aa).

The segment at 75-113 (SSAYNPGTSHPPVSPRFTFSSSPPITAPSSREVSYSSPL) is disordered. The segment covering 91-113 (FTFSSSPPITAPSSREVSYSSPL) has biased composition (polar residues). 2 GATA-type zinc fingers span residues 184–208 (CVNC…CNAC) and 238–262 (CANC…CNAC). Disordered regions lie at residues 279 to 339 (KEGI…HSNS) and 359 to 392 (MPSL…LVLA). The segment covering 284 to 293 (TRKRKPKNLS) has biased composition (basic residues). The segment covering 302 to 316 (SGSDSLTPSTSSTNS) has biased composition (low complexity). Residues 364 to 380 (LSPQNHHSTFNPSPQAN) show a composition bias toward polar residues.

As to expression, expressed at high levels in heart, small intestine, stomach, ovary, and liver. Found at much lower levels in lung, spleen, pancreas and skin.

The protein resides in the nucleus. In terms of biological role, transcriptional activator that binds to the consensus sequence 5'-AGATAG-3'. Associated with cardiac specification and can regulate cardiac-specific transcription during embryogenesis. Activates the expression of cardiac MHC-alpha in vivo. In Xenopus laevis (African clawed frog), this protein is Transcription factor GATA-4 (gata4).